The primary structure comprises 318 residues: Methionyl-tRNA formyltransferase (318 aa).

Position 112 to 115 (112 to 115) interacts with (6S)-5,6,7,8-tetrahydrofolate; the sequence is SILP.

Belongs to the Fmt family.

It catalyses the reaction L-methionyl-tRNA(fMet) + (6R)-10-formyltetrahydrofolate = N-formyl-L-methionyl-tRNA(fMet) + (6S)-5,6,7,8-tetrahydrofolate + H(+). In terms of biological role, attaches a formyl group to the free amino group of methionyl-tRNA(fMet). The formyl group appears to play a dual role in the initiator identity of N-formylmethionyl-tRNA by promoting its recognition by IF2 and preventing the misappropriation of this tRNA by the elongation apparatus. The protein is Methionyl-tRNA formyltransferase of Shewanella baltica (strain OS223).